A 340-amino-acid polypeptide reads, in one-letter code: Geranylgeranyl pyrophosphate synthase atmG (340 aa).

The span at 19–48 shows a compositional bias: polar residues; it reads NLDASYPTSSSLSTEPIDTRSSSPQGSAST. A disordered region spans residues 19-51; sequence NLDASYPTSSSLSTEPIDTRSSSPQGSASTPVD. Residues K69, R72, and H101 each contribute to the isopentenyl diphosphate site. Mg(2+) contacts are provided by D108 and D112. R117 contributes to the dimethylallyl diphosphate binding site. R118 is a binding site for isopentenyl diphosphate. Dimethylallyl diphosphate contacts are provided by K195, T196, and Q229. D232 contributes to the Mg(2+) binding site. Dimethylallyl diphosphate is bound by residues N236, K246, and K256.

This sequence belongs to the FPP/GGPP synthase family. Mg(2+) is required as a cofactor.

It carries out the reaction isopentenyl diphosphate + dimethylallyl diphosphate = (2E)-geranyl diphosphate + diphosphate. The enzyme catalyses isopentenyl diphosphate + (2E)-geranyl diphosphate = (2E,6E)-farnesyl diphosphate + diphosphate. The catalysed reaction is isopentenyl diphosphate + (2E,6E)-farnesyl diphosphate = (2E,6E,10E)-geranylgeranyl diphosphate + diphosphate. In terms of biological role, geranylgeranyl pyrophosphate synthase; part of the ATM1 gene cluster that mediates the biosynthesis of aflatrem, a tremorgenic mycotoxin with acute neurotoxic effects. Synthesis of geranylgeranyl diphosphate (GGPP) by AtmG (a GGPP synthase) precedes condensation of GGPP with indole 3-glycerol phosphate, followed by epoxidation and cyclization by AtmM (a FAD-dependent monooxygenase) and AtmC (a prenyltransferase) to produce paspaline. AtmB is also essential for paspaline production, but its exact role has not been identified yet. AtmP, a cytochrome P450 monooxygenase, subsequently converts paspaline to 13-desoxypaxilline via PC-M6 by removal of the C-30 methyl group and oxidation at C-10. AtmQ, a cytochrome P450 monooxygenase, then catalyzes the oxidation of 13-desoxypaxilline, first at C-7 to produce paspalicine and then at C-13 to form paspalinine. Finally, AtmD prenylates paspalinine to form aflatrem. This chain is Geranylgeranyl pyrophosphate synthase atmG, found in Aspergillus flavus.